The chain runs to 136 residues: Phosphoribosyl-AMP cyclohydrolase (136 aa).

Residue Asp-89 coordinates Mg(2+). A Zn(2+)-binding site is contributed by Cys-90. Positions 91 and 93 each coordinate Mg(2+). Cys-106 and Cys-113 together coordinate Zn(2+).

It belongs to the PRA-CH family. In terms of assembly, homodimer. Mg(2+) serves as cofactor. Zn(2+) is required as a cofactor.

It is found in the cytoplasm. The catalysed reaction is 1-(5-phospho-beta-D-ribosyl)-5'-AMP + H2O = 1-(5-phospho-beta-D-ribosyl)-5-[(5-phospho-beta-D-ribosylamino)methylideneamino]imidazole-4-carboxamide. The protein operates within amino-acid biosynthesis; L-histidine biosynthesis; L-histidine from 5-phospho-alpha-D-ribose 1-diphosphate: step 3/9. Functionally, catalyzes the hydrolysis of the adenine ring of phosphoribosyl-AMP. This chain is Phosphoribosyl-AMP cyclohydrolase, found in Bifidobacterium longum subsp. infantis (strain ATCC 15697 / DSM 20088 / JCM 1222 / NCTC 11817 / S12).